A 106-amino-acid polypeptide reads, in one-letter code: uncharacterized protein (106 aa).

2 disordered regions span residues 33–64 and 87–106; these read FKTS…SRND and NLTG…AVSK. Positions 52–63 are enriched in basic and acidic residues; that stretch reads DGKKQESLESRN. Residues 87–99 show a composition bias toward polar residues; the sequence is NLTGLESGGSSPP.

Its subcellular location is the mitochondrion. This is an uncharacterized protein from Arabidopsis thaliana (Mouse-ear cress).